A 120-amino-acid chain; its full sequence is Fluoride-specific ion channel FluC 1 (120 aa).

Helical transmembrane passes span Ala-3–Ala-23 and Leu-42–Leu-62. Positions 69 and 72 each coordinate Na(+). Residues Ala-99–Leu-119 form a helical membrane-spanning segment.

The protein belongs to the fluoride channel Fluc/FEX (TC 1.A.43) family.

The protein resides in the cell membrane. The catalysed reaction is fluoride(in) = fluoride(out). Na(+) is not transported, but it plays an essential structural role and its presence is essential for fluoride channel function. Functionally, fluoride-specific ion channel. Important for reducing fluoride concentration in the cell, thus reducing its toxicity. The chain is Fluoride-specific ion channel FluC 1 from Thermobifida fusca (strain YX).